The primary structure comprises 137 residues: NTF2-related export protein (137 aa).

Residues 19 to 135 enclose the NTF2 domain; that stretch reads ESKKFMDVYY…YKVKSDRFRY (117 aa).

Preferentially binds Ran-GTP.

The protein resides in the nucleus. Its function is as follows. Stimulator of protein export for NES-containing proteins. Also plays a role in the nuclear export of U1 snRNA, tRNA, and mRNA. The polypeptide is NTF2-related export protein (nxt-1) (Caenorhabditis elegans).